The chain runs to 61 residues: Photosystem II reaction center protein Z (61 aa).

2 helical membrane-spanning segments follow: residues 8–28 (ALLV…VLFS) and 41–61 (LVGS…SFFK).

The protein belongs to the PsbZ family. PSII is composed of 1 copy each of membrane proteins PsbA, PsbB, PsbC, PsbD, PsbE, PsbF, PsbH, PsbI, PsbJ, PsbK, PsbL, PsbM, PsbT, PsbX, PsbY, PsbZ, Psb30/Ycf12, peripheral proteins PsbO, CyanoQ (PsbQ), PsbU, PsbV and a large number of cofactors. It forms dimeric complexes.

The protein localises to the cellular thylakoid membrane. May control the interaction of photosystem II (PSII) cores with the light-harvesting antenna, regulates electron flow through the 2 photosystem reaction centers. PSII is a light-driven water plastoquinone oxidoreductase, using light energy to abstract electrons from H(2)O, generating a proton gradient subsequently used for ATP formation. The sequence is that of Photosystem II reaction center protein Z from Synechococcus sp. (strain JA-3-3Ab) (Cyanobacteria bacterium Yellowstone A-Prime).